Reading from the N-terminus, the 457-residue chain is Transcription factor PCF7 (457 aa).

The stretch at 58–84 forms a coiled coil; that stretch reads STLHYLLQEKERAQQAHEQLQIYQQQQ. The tract at residues 95–121 is disordered; sequence RQPASRGPGGGGGGGDGGGSSGESTPV. Over residues 101-115 the composition is skewed to gly residues; that stretch reads GPGGGGGGGDGGGSS. A TCP domain is found at 140–198; that stretch reads RKDRHSKVCTARGLRDRRVRLAAHTAIRFYDVQDRLGYDRPSKAVDWLMRNAKAAIDEL. Disordered stretches follow at residues 199 to 231 and 263 to 299; these read PDRA…GFGN and KSLF…SNQQ. The span at 212 to 230 shows a compositional bias: polar residues; the sequence is STEQPEGTEQANSTSYGFG. Residues 268-278 show a composition bias toward low complexity; the sequence is SSSTASGAASA.

Forms homodimers and heterodimers.

The protein resides in the nucleus. Its function is as follows. Transcription activator. Binds the promoter core sequence 5'-GGNCC-3'. This chain is Transcription factor PCF7 (PCF7), found in Oryza sativa subsp. indica (Rice).